A 257-amino-acid polypeptide reads, in one-letter code: Acetylglutamate kinase (257 aa).

Residues glycine 43–glycine 44, arginine 65, and asparagine 157 each bind substrate. Residues aspartate 180–leucine 185 and isoleucine 208–threonine 210 contribute to the ATP site.

It belongs to the acetylglutamate kinase family. ArgB subfamily. As to quaternary structure, homodimer.

The protein localises to the cytoplasm. The enzyme catalyses N-acetyl-L-glutamate + ATP = N-acetyl-L-glutamyl 5-phosphate + ADP. It participates in amino-acid biosynthesis; L-arginine biosynthesis; N(2)-acetyl-L-ornithine from L-glutamate: step 2/4. Its function is as follows. Catalyzes the ATP-dependent phosphorylation of N-acetyl-L-glutamate. The polypeptide is Acetylglutamate kinase (Pectobacterium atrosepticum (strain SCRI 1043 / ATCC BAA-672) (Erwinia carotovora subsp. atroseptica)).